A 213-amino-acid polypeptide reads, in one-letter code: High frequency lysogenization protein HflD homolog (213 aa).

It belongs to the HflD family.

Its subcellular location is the cytoplasm. It is found in the cell inner membrane. This chain is High frequency lysogenization protein HflD homolog, found in Klebsiella pneumoniae (strain 342).